A 638-amino-acid polypeptide reads, in one-letter code: Probable potassium transport system protein Kup (638 aa).

Helical transmembrane passes span 25–45 (LAIA…LYSL), 65–85 (VISL…LLFV), 114–134 (AGAL…DAVI), 152–172 (PHLS…LFWI), 184–204 (FGPI…YHIV), 226–246 (LLQA…AEAL), 262–282 (AYGL…ALLI), 291–311 (PFFL…STVA), 352–372 (IYVP…VIGF), 382–402 (YGIA…VVMV), 410–430 (LLVG…FGAN), and 434–454 (VAQG…LLMT).

It belongs to the HAK/KUP transporter (TC 2.A.72) family.

The protein resides in the cell inner membrane. It carries out the reaction K(+)(in) + H(+)(in) = K(+)(out) + H(+)(out). Transport of potassium into the cell. Likely operates as a K(+):H(+) symporter. In Burkholderia lata (strain ATCC 17760 / DSM 23089 / LMG 22485 / NCIMB 9086 / R18194 / 383), this protein is Probable potassium transport system protein Kup.